Reading from the N-terminus, the 280-residue chain is uncharacterized protein (280 aa).

Transmembrane regions (helical) follow at residues 10–29 (IQQN…LLFN), 164–186 (FVFV…FAFI), and 209–228 (IFGL…YFLL).

The protein resides in the cell membrane. This is an uncharacterized protein from Bacillus subtilis (strain 168).